Here is a 369-residue protein sequence, read N- to C-terminus: Opsin Rh6 (369 aa).

Residues 1–46 (MASLHPPSFAYMRDGRNLSLAESVPAEIMHMVDPYWYQWPPLEPMW) are Extracellular-facing. N-linked (GlcNAc...) asparagine glycosylation is present at Asn17. Residues 47–71 (FGIIGFVIAILGTMSLAGNFIVMYI) form a helical membrane-spanning segment. The Cytoplasmic segment spans residues 72–83 (FTSSKGLRTPSN). Residues 84 to 109 (MFVVNLAFSDFMMMFTMFPPVVLNGF) traverse the membrane as a helical segment. The Extracellular portion of the chain corresponds to 110-123 (YGTWIMGPFLCELY). A disulfide bridge connects residues Cys120 and Cys197. Residues 124-143 (GMFGSLFGCVSIWSMTLIAY) traverse the membrane as a helical segment. Topologically, residues 144 to 162 (DRYCVIVKGMARKPLTATA) are cytoplasmic. Residues 163–186 (AVLRLMVVWTICGAWALMPLFGWN) traverse the membrane as a helical segment. Residues 187 to 210 (RYVPEGNMTACGTDYFAKDWWNRS) lie on the Extracellular side of the membrane. N-linked (GlcNAc...) asparagine glycosylation is found at Asn193 and Asn208. Residues 211–238 (YIIVYSLWVYLTPLLTIIFSYWHIMKAV) form a helical membrane-spanning segment. At 239–274 (AAHEKAMREQAKKMNVASLRNSEADKSKAIEIKLAK) the chain is on the cytoplasmic side. A helical transmembrane segment spans residues 275–298 (VALTTISLWFFAWTPYTIINYAGI). Residues 299–305 (FESMHLS) are Extracellular-facing. The helical transmembrane segment at 306–330 (PLSTICGSVFAKANAVCNPIVYGLS) threads the bilayer. Lys317 bears the N6-(retinylidene)lysine mark. The Cytoplasmic portion of the chain corresponds to 331–369 (HPKYKQVLREKMPCLACGKDDLTSDSRTQATAEISESQA).

It belongs to the G-protein coupled receptor 1 family. Opsin subfamily. Phosphorylated on some or all of the serine and threonine residues present in the C-terminal region. Each Drosophila eye is composed of 800 facets or ommatidia. Each ommatidium contains 8 photoreceptor cells (R1-R8), the R1 to R6 cells are outer cells, while R7 and R8 are inner cells. Rh6 is expressed in a subset of R8 cells, most likely expressed in the subset of R8 cells paired with Rh4-expressing R7 cells (R7y).

The protein localises to the membrane. In terms of biological role, visual pigments are the light-absorbing molecules that mediate vision. They consist of an apoprotein, opsin, covalently linked to cis-retinal. The polypeptide is Opsin Rh6 (Rh6) (Drosophila melanogaster (Fruit fly)).